The chain runs to 31 residues: Cytochrome b6-f complex subunit 6 (31 aa).

A helical transmembrane segment spans residues 4–24; it reads ILTYFGILFGILTITVIIFVA.

This sequence belongs to the PetL family. The 4 large subunits of the cytochrome b6-f complex are cytochrome b6, subunit IV (17 kDa polypeptide, PetD), cytochrome f and the Rieske protein, while the 4 small subunits are PetG, PetL, PetM and PetN. The complex functions as a dimer.

It is found in the plastid. The protein localises to the chloroplast thylakoid membrane. Component of the cytochrome b6-f complex, which mediates electron transfer between photosystem II (PSII) and photosystem I (PSI), cyclic electron flow around PSI, and state transitions. PetL is important for photoautotrophic growth as well as for electron transfer efficiency and stability of the cytochrome b6-f complex. The chain is Cytochrome b6-f complex subunit 6 from Chaetosphaeridium globosum (Charophycean green alga).